A 312-amino-acid polypeptide reads, in one-letter code: Ornithine carbamoyltransferase (312 aa).

Carbamoyl phosphate-binding positions include Ser57–Thr60, Gln84, Arg108, and His135–Gln138. L-ornithine is bound by residues Asn166, Asp226, and Ser230–Met231. Carbamoyl phosphate contacts are provided by residues Cys265 to Leu266 and Arg293.

This sequence belongs to the aspartate/ornithine carbamoyltransferase superfamily. OTCase family.

The protein localises to the cytoplasm. It carries out the reaction carbamoyl phosphate + L-ornithine = L-citrulline + phosphate + H(+). The protein operates within amino-acid degradation; L-arginine degradation via ADI pathway; carbamoyl phosphate from L-arginine: step 2/2. Functionally, reversibly catalyzes the transfer of the carbamoyl group from carbamoyl phosphate (CP) to the N(epsilon) atom of ornithine (ORN) to produce L-citrulline. The chain is Ornithine carbamoyltransferase from Brucella abortus (strain 2308).